The sequence spans 129 residues: 4-amino-4-deoxychorismate mutase (129 aa).

Residues 16 to 107 (AAATDPLDAL…ETCRLEDEWI (92 aa)) enclose the Chorismate mutase domain.

It catalyses the reaction 4-amino-4-deoxychorismate = 4-amino-4-deoxyprephenate. The protein operates within antibiotic biosynthesis. In terms of biological role, involved in pristinamycin I biosynthesis. Probably catalyzes the conversion of 4-amino-4-deoxychorismate to 4-amino-4-deoxyprephenate. The polypeptide is 4-amino-4-deoxychorismate mutase (Streptomyces pristinaespiralis).